The following is a 138-amino-acid chain: ATP synthase epsilon chain (138 aa).

The protein belongs to the ATPase epsilon chain family. F-type ATPases have 2 components, CF(1) - the catalytic core - and CF(0) - the membrane proton channel. CF(1) has five subunits: alpha(3), beta(3), gamma(1), delta(1), epsilon(1). CF(0) has three main subunits: a, b and c.

The protein resides in the cell inner membrane. Functionally, produces ATP from ADP in the presence of a proton gradient across the membrane. In Verminephrobacter eiseniae (strain EF01-2), this protein is ATP synthase epsilon chain.